Reading from the N-terminus, the 151-residue chain is Protein SprT-like (151 aa).

Residues 6–147 (LQRMVENLSE…GHCNGKLRMK (142 aa)) enclose the SprT-like domain. Residue histidine 67 coordinates Zn(2+). The active site involves glutamate 68. Zn(2+) is bound at residue histidine 71.

The protein belongs to the SprT family. The cofactor is Zn(2+).

The protein localises to the cytoplasm. The protein is Protein SprT-like of Staphylococcus aureus (strain MRSA252).